The chain runs to 390 residues: Telobox protein 1 (390 aa).

The segment at 30-57 is disordered; that stretch reads ENPSKREVAQDVPGFERKPTKVRKPRVK. Over residues 32-48 the composition is skewed to basic and acidic residues; that stretch reads PSKREVAQDVPGFERKP. 2 consecutive HTH myb-type domains span residues 50-109 and 135-193; these read KVRK…PEDY and STRK…PERY. Residues 78–105 constitute a DNA-binding region (H-T-H motif); sequence WKKILLDERFHFTNRSPNDLKDRFRTIL. The segment at 115–143 is disordered; sequence NAKTHMGRPQKIPHTVGLSKSTRKERKQF. Positions 162 to 189 form a DNA-binding region, H-T-H motif; sequence WTRISKDANLGLQNRRSTDLRDRFRNAF. 2 stretches are compositionally biased toward polar residues: residues 244 to 257 and 322 to 340; these read SNPN…TEQP and ISPS…SIQQ. Disordered stretches follow at residues 244 to 278 and 316 to 390; these read SNPN…FTSQ and QPPS…DNRG. Over residues 347-360 the composition is skewed to low complexity; it reads PPLSSNTLNSSTLP.

The protein localises to the nucleus. General transcription factor with prominent roles in controlling histone levels and stability. Binds and regulates the activities of many promoters, including those controlling the expression of all four types of canonical histones. Is also involved in the centromeric loading of cnp1 and maintenance of centromere identity. Moreover, regulates the expression of cdc2, a protease capable of histone clipping. In Schizosaccharomyces pombe (strain 972 / ATCC 24843) (Fission yeast), this protein is Telobox protein 1.